The following is a 180-amino-acid chain: MAEQVTEATASGVFCSRILNMVNSEDVNAIILAQRHMLDRFEKTNEMLLNFNGLSNTRLQQMSDRFAHHTRTLVEMKKDLDIIFRRIRMLKGKLAKQYPESFNNVHESPILEDDDDFDPTPRSAATTIATSEQSTESCDTSPSIISPAMSQDFEDLSQAPSDTPSVNGQILTDEEVVHED.

Polar residues-rich tracts occupy residues 126–144 and 158–170; these read TTIATSEQSTESCDTSPSI and QAPSDTPSVNGQI. The disordered stretch occupies residues 126-180; it reads TTIATSEQSTESCDTSPSIISPAMSQDFEDLSQAPSDTPSVNGQILTDEEVVHED.

This sequence belongs to the KXD1 family. In terms of assembly, associates with the BLOC-1 complex.

Its subcellular location is the lysosome membrane. Its function is as follows. As part of a BORC-like complex may play a role in lysosomes movement and localization at the cell periphery. Associated with the cytosolic face of lysosomes, this complex may couple lysosomes to microtubule plus-end-directed kinesin motor. May also be involved in the biogenesis of lysosome-related organelles such as melanosomes. This Xenopus tropicalis (Western clawed frog) protein is KxDL motif-containing protein 1 (kxd1).